The chain runs to 175 residues: Ribulose bisphosphate carboxylase small subunit, chloroplastic (175 aa).

Residues 1–34 (MSFATTNKTIVPCATTKQIVRPRFLSNGTISKSR) constitute a chloroplast transit peptide.

It belongs to the RuBisCO small chain family. Heterohexadecamer of 8 large and 8 small subunits.

The protein resides in the plastid. It localises to the chloroplast. Functionally, ruBisCO catalyzes two reactions: the carboxylation of D-ribulose 1,5-bisphosphate, the primary event in carbon dioxide fixation, as well as the oxidative fragmentation of the pentose substrate. Both reactions occur simultaneously and in competition at the same active site. Although the small subunit is not catalytic it is essential for maximal activity. This Batophora oerstedii (Green alga) protein is Ribulose bisphosphate carboxylase small subunit, chloroplastic.